The chain runs to 116 residues: C-C motif chemokine 6 (116 aa).

Residues 1 to 21 (MRNSKTAISFFILVAVLGSQA) form the signal peptide. 3 cysteine pairs are disulfide-bonded: Cys-50/Cys-73, Cys-51/Cys-89, and Cys-60/Cys-100.

The protein belongs to the intercrine beta (chemokine CC) family. In terms of processing, the N-terminal is proteolytically cleaved by proteases associated with inflammatory responses. The processed forms CL6(22-95) and CCL6(23-95) show increase in CCR1-mediated signaling and chemotaxis assays in vitro. In terms of tissue distribution, expressed in myelopoietic bone marrow cultures stimulated by GM-CSF.

The protein localises to the secreted. In terms of biological role, chemotactic factor that attracts mostly macrophage, but it can also attract B cells, CD4(+) lymphocytes and eosinophils. In Mus musculus (Mouse), this protein is C-C motif chemokine 6 (Ccl6).